The sequence spans 123 residues: UPF0738 protein BCG9842_B4089 (123 aa).

The protein belongs to the UPF0738 family.

In Bacillus cereus (strain G9842), this protein is UPF0738 protein BCG9842_B4089.